The following is a 219-amino-acid chain: 3-demethoxyubiquinol 3-hydroxylase (219 aa).

Positions 21 to 51 (RTLTPGTTQAERTPAHAAPAPDAPEAGTLPS) are disordered. Over residues 35 to 46 (AHAAPAPDAPEA) the composition is skewed to low complexity. Fe cation-binding residues include glutamate 68, glutamate 98, histidine 101, glutamate 150, glutamate 182, and histidine 185.

It belongs to the COQ7 family. It depends on Fe cation as a cofactor.

It is found in the cell membrane. The enzyme catalyses a 5-methoxy-2-methyl-3-(all-trans-polyprenyl)benzene-1,4-diol + AH2 + O2 = a 3-demethylubiquinol + A + H2O. It participates in cofactor biosynthesis; ubiquinone biosynthesis. Its function is as follows. Catalyzes the hydroxylation of 2-nonaprenyl-3-methyl-6-methoxy-1,4-benzoquinol during ubiquinone biosynthesis. The sequence is that of 3-demethoxyubiquinol 3-hydroxylase from Alcanivorax borkumensis (strain ATCC 700651 / DSM 11573 / NCIMB 13689 / SK2).